The following is a 255-amino-acid chain: Thiazole synthase (255 aa).

Catalysis depends on Lys96, which acts as the Schiff-base intermediate with DXP. 1-deoxy-D-xylulose 5-phosphate contacts are provided by residues Gly157, 183-184, and 205-206; these read AG and NT.

The protein belongs to the ThiG family. In terms of assembly, homotetramer. Forms heterodimers with either ThiH or ThiS.

It localises to the cytoplasm. The enzyme catalyses [ThiS sulfur-carrier protein]-C-terminal-Gly-aminoethanethioate + 2-iminoacetate + 1-deoxy-D-xylulose 5-phosphate = [ThiS sulfur-carrier protein]-C-terminal Gly-Gly + 2-[(2R,5Z)-2-carboxy-4-methylthiazol-5(2H)-ylidene]ethyl phosphate + 2 H2O + H(+). The protein operates within cofactor biosynthesis; thiamine diphosphate biosynthesis. In terms of biological role, catalyzes the rearrangement of 1-deoxy-D-xylulose 5-phosphate (DXP) to produce the thiazole phosphate moiety of thiamine. Sulfur is provided by the thiocarboxylate moiety of the carrier protein ThiS. In vitro, sulfur can be provided by H(2)S. The protein is Thiazole synthase of Geobacillus thermodenitrificans (strain NG80-2).